The chain runs to 345 residues: S-adenosylmethionine:tRNA ribosyltransferase-isomerase (345 aa).

It belongs to the QueA family. In terms of assembly, monomer.

It is found in the cytoplasm. The enzyme catalyses 7-aminomethyl-7-carbaguanosine(34) in tRNA + S-adenosyl-L-methionine = epoxyqueuosine(34) in tRNA + adenine + L-methionine + 2 H(+). Its pathway is tRNA modification; tRNA-queuosine biosynthesis. Functionally, transfers and isomerizes the ribose moiety from AdoMet to the 7-aminomethyl group of 7-deazaguanine (preQ1-tRNA) to give epoxyqueuosine (oQ-tRNA). In Helicobacter pylori (strain Shi470), this protein is S-adenosylmethionine:tRNA ribosyltransferase-isomerase.